The sequence spans 268 residues: tRNA threonylcarbamoyladenosine dehydratase (268 aa).

A helical transmembrane segment spans residues 237-257 (GFGAATMVTATFGFVAVSHAL).

The protein belongs to the HesA/MoeB/ThiF family. In terms of assembly, interacts with CsdE.

The protein resides in the membrane. Its function is as follows. Catalyzes the ATP-dependent dehydration of threonylcarbamoyladenosine at position 37 (t(6)A37) to form cyclic t(6)A37 (ct(6)A37) in tRNAs that read codons beginning with adenine. TcdA is also part of a sulfur transfer pathway; is able to accept sulfur from CsdA directly in vitro, but CsdE might act as the sulfur donor in vivo. This Escherichia coli (strain K12) protein is tRNA threonylcarbamoyladenosine dehydratase (tcdA).